A 260-amino-acid chain; its full sequence is 14-3-3 protein 3 (260 aa).

This sequence belongs to the 14-3-3 family. Homodimer.

The chain is 14-3-3 protein 3 (TFT3) from Solanum lycopersicum (Tomato).